The chain runs to 261 residues: Ethanolamine ammonia-lyase small subunit (261 aa).

The adenosylcob(III)alamin site is built by Val-157, Glu-178, and Cys-207.

Belongs to the EutC family. The basic unit is a heterodimer which dimerizes to form tetramers. The heterotetramers trimerize; 6 large subunits form a core ring with 6 small subunits projecting outwards. It depends on adenosylcob(III)alamin as a cofactor.

It is found in the bacterial microcompartment. The enzyme catalyses ethanolamine = acetaldehyde + NH4(+). It functions in the pathway amine and polyamine degradation; ethanolamine degradation. Functionally, catalyzes the deamination of various vicinal amino-alcohols to oxo compounds. Allows this organism to utilize ethanolamine as the sole source of nitrogen and carbon in the presence of external vitamin B12. The sequence is that of Ethanolamine ammonia-lyase small subunit from Rhodopseudomonas palustris (strain BisA53).